A 122-amino-acid polypeptide reads, in one-letter code: Serum amyloid A-2 protein (122 aa).

Positions 1-18 (MKPFLSIIFCFLVLGVDS) are cleaved as a signal peptide. Position 19 is a pyrrolidone carboxylic acid (Q19). Residues 100-122 (ANEWGRSGKDPNFFRPPGLPSKY) form a disordered region.

This sequence belongs to the SAA family. As to quaternary structure, apolipoprotein of the HDL complex. Expressed by the liver; secreted in plasma.

It localises to the secreted. Functionally, major acute phase reactant. The protein is Serum amyloid A-2 protein (SAA2) of Mesocricetus auratus (Golden hamster).